The primary structure comprises 508 residues: Cytochrome P450 monooxygenase aflV (508 aa).

The helical transmembrane segment at 18 to 38 (LTWWFLAVGGAWIVSKIIKIL) threads the bilayer. 4 N-linked (GlcNAc...) asparagine glycosylation sites follow: N192, N209, N302, and N408. Residue C453 coordinates heme.

It belongs to the cytochrome P450 family. Heme serves as cofactor.

The protein resides in the membrane. The protein operates within mycotoxin biosynthesis; aflatoxin biosynthesis. In terms of biological role, cytochrome P450 monooxygenase; part of the gene cluster that mediates the biosynthesis of aflatoxins, a group of polyketide-derived furanocoumarins, and part of the most toxic and carcinogenic compounds among the known mycotoxins. The four major aflatoxins produced by A.parasiticus are aflatoxin B1 (AFB1), aflatoxin B2 (AFB2), aflatoxin G1 (AFG1) and aflatoxin G2 (AFG2). The role of the cytochrome P450 monooxygenase aflV in aflatoxin biosynthesis has still to be characterized. The biosynthesis of aflatoxins begins with the norsolorinic acid synthase aflC that combines a hexanoyl starter unit produced by the fatty acid synthase aflA/aflB and 7 malonyl-CoA extender units to synthesize the precursor NOR. The second step is the conversion of NOR to averantin and requires the norsolorinic acid ketoreductase aflD, which catalyzes the dehydration of norsolorinic acid to form (1'S)-averantin. The norsolorinic acid reductases aflE and aflF may also play a role in the conversion of NOR to AVN. The cytochrome P450 monooxygenase aflG then catalyzes the hydroxylation of AVN to 5'hydroxyaverantin (HAVN). The next step is performed by the 5'-hydroxyaverantin dehydrogenase aflH that transforms HAVN to 5'-oxoaverantin (OAVN) which is further converted to averufin (AVF) by aflK that plays a dual role in the pathway, as a 5'-oxoaverantin cyclase that mediates conversion of 5'-oxoaverantin, as well as a versicolorin B synthase in a later step in the pathway. The averufin oxidase aflI catalyzes the conversion of AVF to versiconal hemiacetal acetate (VHA). VHA is then the substrate for the versiconal hemiacetal acetate esterase aflJ to yield versiconal (VAL). Versicolorin B synthase aflK then converts VAL to versicolorin B (VERB) by closing the bisfuran ring of aflatoxin which is required for DNA-binding, thus giving to aflatoxin its activity as a mutagen. Then, the activity of the versicolorin B desaturase aflL leads to versicolorin A (VERA). A branch point starts from VERB since it can also be converted to dihydrodemethylsterigmatocystin (DMDHST), probably also by aflL, VERA being a precursor for aflatoxins B1 and G1, and DMDHST for aflatoxins B2 and G2. Next, the versicolorin reductase aflM and the cytochrome P450 monooxygenase aflN are involved in conversion of VERA to demethylsterigmatocystin (DMST). AflX and aflY seem also involved in this step, through probable aflX-mediated epoxide ring-opening step following versicolorin A oxidation and aflY-mediated Baeyer-Villiger oxidation required for the formation of the xanthone ring. The methyltransferase aflO then leads to the modification of DMST to sterigmatocystin (ST), and of DMDHST to dihydrosterigmatocystin (DHST). Both ST and DHST are then substrates of the O-methyltransferase aflP to yield O-methylsterigmatocystin (OMST) and dihydro-O-methylsterigmatocystin (DHOMST), respectively. Finally OMST is converted to aflatoxins B1 and G1, and DHOMST to aflatoxins B2 and G2, via the action of several enzymes including O-methylsterigmatocystin oxidoreductase aflQ, the cytochrome P450 monooxygenase aflU, but also the NADH-dependent flavin oxidoreductase nadA which is specifically required for the synthesis of AFG1. The chain is Cytochrome P450 monooxygenase aflV from Aspergillus parasiticus (strain ATCC 56775 / NRRL 5862 / SRRC 143 / SU-1).